Here is a 229-residue protein sequence, read N- to C-terminus: NAD(P)H-hydrate epimerase (229 aa).

Positions Y11–T222 constitute a YjeF N-terminal domain. Position 59-63 (N59–D63) interacts with (6S)-NADPHX. K(+) is bound by residues N60 and D124. (6S)-NADPHX-binding positions include G128–A136 and D164. S167 serves as a coordination point for K(+).

The protein belongs to the NnrE/AIBP family. Requires K(+) as cofactor.

It carries out the reaction (6R)-NADHX = (6S)-NADHX. It catalyses the reaction (6R)-NADPHX = (6S)-NADPHX. Functionally, catalyzes the epimerization of the S- and R-forms of NAD(P)HX, a damaged form of NAD(P)H that is a result of enzymatic or heat-dependent hydration. This is a prerequisite for the S-specific NAD(P)H-hydrate dehydratase to allow the repair of both epimers of NAD(P)HX. The chain is NAD(P)H-hydrate epimerase from Clavibacter sepedonicus (Clavibacter michiganensis subsp. sepedonicus).